The sequence spans 201 residues: Orotate phosphoribosyltransferase (201 aa).

Residue 113 to 121 participates in 5-phospho-alpha-D-ribose 1-diphosphate binding; sequence EDIITTGKS. Thr-117 and Arg-145 together coordinate orotate.

Belongs to the purine/pyrimidine phosphoribosyltransferase family. PyrE subfamily. In terms of assembly, homodimer. Requires Mg(2+) as cofactor.

The catalysed reaction is orotidine 5'-phosphate + diphosphate = orotate + 5-phospho-alpha-D-ribose 1-diphosphate. Its pathway is pyrimidine metabolism; UMP biosynthesis via de novo pathway; UMP from orotate: step 1/2. Catalyzes the transfer of a ribosyl phosphate group from 5-phosphoribose 1-diphosphate to orotate, leading to the formation of orotidine monophosphate (OMP). The sequence is that of Orotate phosphoribosyltransferase from Helicobacter pylori (strain ATCC 700392 / 26695) (Campylobacter pylori).